Reading from the N-terminus, the 247-residue chain is Small ribosomal subunit protein uS2 (247 aa).

This sequence belongs to the universal ribosomal protein uS2 family.

The polypeptide is Small ribosomal subunit protein uS2 (Ralstonia pickettii (strain 12J)).